The sequence spans 332 residues: Phosphate acyltransferase (332 aa).

It belongs to the PlsX family. As to quaternary structure, homodimer. Probably interacts with PlsY.

It localises to the cytoplasm. The catalysed reaction is a fatty acyl-[ACP] + phosphate = an acyl phosphate + holo-[ACP]. It functions in the pathway lipid metabolism; phospholipid metabolism. Its function is as follows. Catalyzes the reversible formation of acyl-phosphate (acyl-PO(4)) from acyl-[acyl-carrier-protein] (acyl-ACP). This enzyme utilizes acyl-ACP as fatty acyl donor, but not acyl-CoA. This chain is Phosphate acyltransferase, found in Fusobacterium nucleatum subsp. nucleatum (strain ATCC 25586 / DSM 15643 / BCRC 10681 / CIP 101130 / JCM 8532 / KCTC 2640 / LMG 13131 / VPI 4355).